A 231-amino-acid polypeptide reads, in one-letter code: Nuclear transcription factor Y subunit C-9 (231 aa).

Residues 211–231 (NPYMGQPMWQQQAPDQPDQEN) are disordered.

It belongs to the NFYC/HAP5 subunit family. Heterotrimeric transcription factor composed of three components, NF-YA, NF-YB and NF-YC. Interacts with NFYA2, NFYB2, CO and RGA. Interacts with REF6 (via N-terminus). As to expression, ubiquitous. Present in etiolated seedlings.

It is found in the nucleus. Functionally, stimulates the transcription of various genes by recognizing and binding to a CCAAT motif in promoters. Interacts with REF6 to directly regulate SOC1 transcription in response to flowering signals from photoperiod and gibberellic acid pathways. The protein is Nuclear transcription factor Y subunit C-9 (NFYC9) of Arabidopsis thaliana (Mouse-ear cress).